Here is a 555-residue protein sequence, read N- to C-terminus: Bifunctional epoxide hydrolase 2 (555 aa).

The tract at residues methionine 1–threonine 224 is phosphatase. 2 residues coordinate Mg(2+): aspartate 9 and aspartate 11. At lysine 43 the chain carries N6-acetyllysine. A phosphate-binding site is contributed by threonine 123–asparagine 124. Aspartate 185 lines the Mg(2+) pocket. An N6-acetyllysine mark is found at lysine 191 and lysine 215. Residues serine 235–leucine 555 are epoxide hydrolase. One can recognise an AB hydrolase-1 domain in the interval proline 259–proline 531. The Nucleophile role is filled by aspartate 335. A Phosphoserine modification is found at serine 370. Substrate is bound at residue tyrosine 383. The residue at position 455 (lysine 455) is an N6-succinyllysine. Tyrosine 466 functions as the Proton donor in the catalytic mechanism. Lysine 505 bears the N6-succinyllysine mark. Cysteine 522 is lipidated: S-(15-deoxy-Delta12,14-prostaglandin J2-9-yl)cysteine. Residue histidine 524 is the Proton acceptor of the active site. The Microbody targeting signal motif lies at serine 553–leucine 555. N6-succinyllysine is present on lysine 554.

Belongs to the AB hydrolase superfamily. Epoxide hydrolase family. Homodimer. Mg(2+) serves as cofactor. The covalent modification of cysteine by 15-deoxy-Delta12,14-prostaglandin-J2 is autocatalytic and reversible. It may occur as an alternative to other cysteine modifications, such as S-nitrosylation and S-palmitoylation.

It is found in the cytoplasm. Its subcellular location is the peroxisome. It carries out the reaction an epoxide + H2O = an ethanediol. The catalysed reaction is (9S,10S)-10-hydroxy-9-(phosphooxy)octadecanoate + H2O = (9S,10S)-9,10-dihydroxyoctadecanoate + phosphate. The enzyme catalyses (14R,15S)-epoxy-(5Z,8Z,11Z)-eicosatrienoate + H2O = (14R,15R)-dihydroxy-(5Z,8Z,11Z)-eicosatrienoate. Its activity is regulated as follows. Inhibited by 1-(1-acetylpiperidin-4-yl)-3-(4-(trifl uoromethoxy)phenyl)urea (TPAU), 1-cyclohexyl-3-dodecylurea (CDU), 12-(3-adamantan-1-yl-ureido)-dodecanoic acid (AUDA), 1-((3S, 5S, 7S)-adamantan-1-yl)-3-(5-(2-(2-ethoxyethoxy) ethoxy)pentyl)urea (AEPU), N-adamantyl-N[']-cyclohexyl urea (ACU), 4-(((1S, 4S)-4-(3-((3S, 5S, 7S)-adamantan-1-yl) ureido)cyclohexyl)oxy)benzoic acid (c-AUCB), 4-(((1R, 4R)-4-(3-((3S, 5S, 7S)-adamantan-1-yl)ureido)cyclohexyl)oxy)benzoic acid (t-AUCB), 4-(((1R, 4R)-4-(3-(4(trifluoromethoxy)phenyl)ureido)cyclohexyl)oxy)benzoic acid (t-TAUCB) and to a lesser extent by 8-(3-((3S, 5S, 7S)-adamantan-1-yl)ureido) octanoic acid (AUOA). In terms of biological role, bifunctional enzyme. The C-terminal domain has epoxide hydrolase activity and acts on epoxides (alkene oxides, oxiranes) and arene oxides. Plays a role in xenobiotic metabolism by degrading potentially toxic epoxides. Also determines steady-state levels of physiological mediators. The N-terminal domain has lipid phosphatase activity, with the highest activity towards threo-9,10-phosphonooxy-hydroxy-octadecanoic acid, followed by erythro-9,10-phosphonooxy-hydroxy-octadecanoic acid, 12-phosphonooxy-octadec-9Z-enoic acid and 12-phosphonooxy-octadec-9E-enoic acid. This is Bifunctional epoxide hydrolase 2 (EPHX2) from Sus scrofa (Pig).